Consider the following 250-residue polypeptide: 5-oxoprolinase subunit A (250 aa).

This sequence belongs to the LamB/PxpA family. Forms a complex composed of PxpA, PxpB and PxpC.

The enzyme catalyses 5-oxo-L-proline + ATP + 2 H2O = L-glutamate + ADP + phosphate + H(+). Functionally, catalyzes the cleavage of 5-oxoproline to form L-glutamate coupled to the hydrolysis of ATP to ADP and inorganic phosphate. The polypeptide is 5-oxoprolinase subunit A (Streptomyces coelicolor (strain ATCC BAA-471 / A3(2) / M145)).